The chain runs to 956 residues: Bifunctional glutamine synthetase adenylyltransferase/adenylyl-removing enzyme (956 aa).

The adenylyl removase stretch occupies residues 1-450; it reads MENMSEQALP…YFKETVGGQE (450 aa). Residues 456–956 are adenylyl transferase; sequence EQWTAQLWSL…IYEQVLNNGQ (501 aa).

It belongs to the GlnE family. Mg(2+) serves as cofactor.

It catalyses the reaction [glutamine synthetase]-O(4)-(5'-adenylyl)-L-tyrosine + phosphate = [glutamine synthetase]-L-tyrosine + ADP. It carries out the reaction [glutamine synthetase]-L-tyrosine + ATP = [glutamine synthetase]-O(4)-(5'-adenylyl)-L-tyrosine + diphosphate. Involved in the regulation of glutamine synthetase GlnA, a key enzyme in the process to assimilate ammonia. When cellular nitrogen levels are high, the C-terminal adenylyl transferase (AT) inactivates GlnA by covalent transfer of an adenylyl group from ATP to specific tyrosine residue of GlnA, thus reducing its activity. Conversely, when nitrogen levels are low, the N-terminal adenylyl removase (AR) activates GlnA by removing the adenylyl group by phosphorolysis, increasing its activity. The regulatory region of GlnE binds the signal transduction protein PII (GlnB) which indicates the nitrogen status of the cell. The protein is Bifunctional glutamine synthetase adenylyltransferase/adenylyl-removing enzyme of Shewanella loihica (strain ATCC BAA-1088 / PV-4).